A 119-amino-acid chain; its full sequence is Putative F-box protein At2g39415 (119 aa).

In terms of domain architecture, F-box spans 37–92 (IDSISSLPDVILQQILSSLPTNLAIRTSVLSTRWRHVWSDTPYIYFDGPGTLYRGL).

The chain is Putative F-box protein At2g39415 from Arabidopsis thaliana (Mouse-ear cress).